The following is a 391-amino-acid chain: Chaperone protein DnaJ (391 aa).

One can recognise a J domain in the interval 2-67 (DYYDVLGVSK…QKRESYDRYG (66 aa)). The segment at 148-226 (GVEKELLVSG…CRGQGRVKDK (79 aa)) adopts a CR-type zinc-finger fold. Zn(2+) is bound by residues Cys-161, Cys-164, Cys-178, Cys-181, Cys-200, Cys-203, Cys-214, and Cys-217. CXXCXGXG motif repeat units lie at residues 161-168 (CTTCSGSG), 178-185 (CERCKGSG), 200-207 (CPECGGEG), and 214-221 (CSNCRGQG).

The protein belongs to the DnaJ family. As to quaternary structure, homodimer. The cofactor is Zn(2+).

Its subcellular location is the cytoplasm. Functionally, participates actively in the response to hyperosmotic and heat shock by preventing the aggregation of stress-denatured proteins and by disaggregating proteins, also in an autonomous, DnaK-independent fashion. Unfolded proteins bind initially to DnaJ; upon interaction with the DnaJ-bound protein, DnaK hydrolyzes its bound ATP, resulting in the formation of a stable complex. GrpE releases ADP from DnaK; ATP binding to DnaK triggers the release of the substrate protein, thus completing the reaction cycle. Several rounds of ATP-dependent interactions between DnaJ, DnaK and GrpE are required for fully efficient folding. Also involved, together with DnaK and GrpE, in the DNA replication of plasmids through activation of initiation proteins. The sequence is that of Chaperone protein DnaJ from Chlamydia felis (strain Fe/C-56) (Chlamydophila felis).